Consider the following 244-residue polypeptide: 3-deoxy-manno-octulosonate cytidylyltransferase (244 aa).

The protein belongs to the KdsB family.

Its subcellular location is the cytoplasm. The enzyme catalyses 3-deoxy-alpha-D-manno-oct-2-ulosonate + CTP = CMP-3-deoxy-beta-D-manno-octulosonate + diphosphate. It participates in nucleotide-sugar biosynthesis; CMP-3-deoxy-D-manno-octulosonate biosynthesis; CMP-3-deoxy-D-manno-octulosonate from 3-deoxy-D-manno-octulosonate and CTP: step 1/1. The protein operates within bacterial outer membrane biogenesis; lipopolysaccharide biosynthesis. Functionally, activates KDO (a required 8-carbon sugar) for incorporation into bacterial lipopolysaccharide in Gram-negative bacteria. In Ruthia magnifica subsp. Calyptogena magnifica, this protein is 3-deoxy-manno-octulosonate cytidylyltransferase.